Here is a 294-residue protein sequence, read N- to C-terminus: 33 kDa chaperonin (294 aa).

Intrachain disulfides connect Cys238-Cys240 and Cys271-Cys274.

It belongs to the HSP33 family. In terms of processing, under oxidizing conditions two disulfide bonds are formed involving the reactive cysteines. Under reducing conditions zinc is bound to the reactive cysteines and the protein is inactive.

Its subcellular location is the cytoplasm. Redox regulated molecular chaperone. Protects both thermally unfolding and oxidatively damaged proteins from irreversible aggregation. Plays an important role in the bacterial defense system toward oxidative stress. In Staphylococcus haemolyticus (strain JCSC1435), this protein is 33 kDa chaperonin.